The primary structure comprises 243 residues: Homeobox protein nob-1 (243 aa).

The segment covering 1–12 (MISVMQQMINND) has biased composition (polar residues). 2 disordered regions span residues 1-23 (MISV…SITS) and 40-67 (SIQG…TGMV). The homeobox DNA-binding region spans 162-221 (GKKKRQPYKKDQISRLEYEYSVNQYLTNKRRSELSAQLMLDEKQVKVWFQNRRMKDKKLR).

The protein belongs to the abd-b homeobox family. As to quaternary structure, interacts with nuclear receptor nhr-25. Interacts with geminin homolog gmn-1. Interacts with homeodomain protein ceh-20.

The protein localises to the nucleus. In terms of biological role, transcription factor, involved in posterior embryonic patterning, morphogenetic movements of the posterior hypodermis, and cell fate specification. Binds to the 5'-TAGT-3' motif in regulatory elements of genes, including Meis protein psa-3 and microRNA mir-57. Involved in a negative regulatory loop with mir-57 to specify posterior cell identities. Required for asymmetric division of the T hypodermal cell, acting via the regulation of asymmetric expression of psa-3 in cooperation with ceh-20 and the Wnt-MAPK pathway. Involved in the regulation of the onset of non-apoptotic cell death in the linker cell, acting together with the Wnt signaling pathway. Involved in promoting embryogenesis, in concert with orphan nuclear receptor nhr-25. May regulate expression of transcription factor dmd-3. This Caenorhabditis elegans protein is Homeobox protein nob-1.